Here is a 157-residue protein sequence, read N- to C-terminus: SsrA-binding protein (157 aa).

The tract at residues 133–157 is disordered; that stretch reads LHDKRETEKKRDWSREKSRLLRARG. Positions 135–151 are enriched in basic and acidic residues; it reads DKRETEKKRDWSREKSR.

Belongs to the SmpB family.

The protein resides in the cytoplasm. In terms of biological role, required for rescue of stalled ribosomes mediated by trans-translation. Binds to transfer-messenger RNA (tmRNA), required for stable association of tmRNA with ribosomes. tmRNA and SmpB together mimic tRNA shape, replacing the anticodon stem-loop with SmpB. tmRNA is encoded by the ssrA gene; the 2 termini fold to resemble tRNA(Ala) and it encodes a 'tag peptide', a short internal open reading frame. During trans-translation Ala-aminoacylated tmRNA acts like a tRNA, entering the A-site of stalled ribosomes, displacing the stalled mRNA. The ribosome then switches to translate the ORF on the tmRNA; the nascent peptide is terminated with the 'tag peptide' encoded by the tmRNA and targeted for degradation. The ribosome is freed to recommence translation, which seems to be the essential function of trans-translation. In Afipia carboxidovorans (strain ATCC 49405 / DSM 1227 / KCTC 32145 / OM5) (Oligotropha carboxidovorans), this protein is SsrA-binding protein.